Reading from the N-terminus, the 991-residue chain is 5'-3' exoribonuclease 2 (991 aa).

Residues 264–268 (TKKTK) carry the Nuclear localization signal motif. Positions 404–418 (RRNENYRRRQQRESN) are enriched in basic and acidic residues. Disordered regions lie at residues 404–461 (RRNE…TQKI), 547–582 (SIESSTPVVHPIDTKVSNVGQKRKAPDSTEENENTD), and 872–991 (AERS…NGYY). Residues 433 to 452 (SVETQSTEVVTSSKSTSVDT) show a composition bias toward low complexity. 2 stretches are compositionally biased toward low complexity: residues 878–889 (SRRNNGNSYRGG) and 896–910 (RRSYQSQSYSSRQSY). Positions 926–938 (WSGNGNFPRSNAS) are enriched in polar residues. Residues 946–958 (EGYGGRSRGGGYS) show a composition bias toward gly residues. The segment covering 980–991 (ESYNNNNRNGYY) has biased composition (polar residues).

Belongs to the 5'-3' exonuclease family. XRN2/RAT1 subfamily. In terms of assembly, interacts with din1/rai1; the interaction is direct, stabilizes dhp1 protein structure and may stimulate its exoribonuclease activity. The interaction also stimulates din1 pyrophosphohydrolase activity, probably by recruiting it to mRNA substrates.

It is found in the nucleus. Functionally, possesses 5'-&gt;3' exoribonuclease activity. Required for the processing of nuclear mRNA and rRNA precursors. May promote the termination of transcription by RNA polymerase II. Essential for vegetative cell growth and chromosome segregation. This Schizosaccharomyces pombe (strain 972 / ATCC 24843) (Fission yeast) protein is 5'-3' exoribonuclease 2 (dhp1).